Here is a 1173-residue protein sequence, read N- to C-terminus: Tectonin beta-propeller repeat-containing protein 1 (1173 aa).

TECPR repeat units follow at residues 210–239 (SVWA…WSLI), 254–285 (DLLW…STVE), 301–332 (DVVW…IEMV), and 344–376 (NQVW…KAIV). Polar residues predominate over residues 413 to 430 (GDADTSSDTELSSIPTNL). A disordered region spans residues 413–495 (GDADTSSDTE…STNPTPSTEL (83 aa)). Positions 431-456 (SSTPPMGAAASSASSTGSQAAGAPAS) are enriched in low complexity. Over residues 475-485 (SDEKAHLESRK) the composition is skewed to basic and acidic residues. A compositionally biased stretch (polar residues) spans 486-495 (STNPTPSTEL). In terms of domain architecture, PH spans 618–727 (VWVKTGMLQW…WLSLLTMSCC (110 aa)). 5 TECPR repeats span residues 739–766 (HAIW…PHPM), 962–991 (ALWA…WLHV), 1007–1037 (QVWA…YHIP), 1053–1083 (SVFV…DHVS), and 1095–1135 (DQVW…DYGI). The segment at 1147-1173 (NASQAPRGTVPSESPPEPMESEGRVMC) is disordered.

Belongs to the TECPR1 family.

The protein localises to the cytoplasmic vesicle. Its subcellular location is the autophagosome membrane. The protein resides in the lysosome membrane. Functionally, tethering factor involved in autophagy. Involved in autophagosome maturation by promoting the autophagosome fusion with lysosomes. Binds phosphatidylinositol-3-phosphate (PtdIns(3)P) present at the surface of autophagosomes. This is Tectonin beta-propeller repeat-containing protein 1 (TECPR1) from Gallus gallus (Chicken).